The primary structure comprises 228 residues: L-ribulose-5-phosphate 4-epimerase UlaF (228 aa).

Substrate contacts are provided by residues 26-27 (GN), 43-44 (SG), and 72-73 (SS). Positions 74, 93, and 95 each coordinate Zn(2+). The active-site Proton donor/acceptor is the aspartate 118. Histidine 167 is a Zn(2+) binding site. The Proton donor/acceptor role is filled by tyrosine 225.

The protein belongs to the aldolase class II family. AraD/FucA subfamily. Requires Zn(2+) as cofactor.

It carries out the reaction L-ribulose 5-phosphate = D-xylulose 5-phosphate. Its pathway is cofactor degradation; L-ascorbate degradation; D-xylulose 5-phosphate from L-ascorbate: step 4/4. Functionally, catalyzes the isomerization of L-ribulose 5-phosphate to D-xylulose 5-phosphate. Is involved in the anaerobic L-ascorbate utilization. This chain is L-ribulose-5-phosphate 4-epimerase UlaF, found in Escherichia coli (strain K12 / MC4100 / BW2952).